Consider the following 219-residue polypeptide: MSEGEAQAPRGRGLPPDVLAEQVELWWSQQPRRSALCFAVAVGLVAGCGAGGVALLSSTSSRSGEWRLAVGTALCLLALLVLVKQLMSSAVQDMNCIRQPHHVALLRSGGGADALVVLLSGLVLLVTGLTLAGLAAAPAPARPLAAMLSVGITLAASGALLLLGLLLYQVAVSGHCPPARTAAPTTRSDRSGNGSVFSISGQLSAGQRHETTSSIASLI.

4 helical membrane passes run 36-56 (LCFA…VALL), 68-88 (LAVG…QLMS), 114-134 (ALVV…LAGL), and 147-167 (MLSV…GLLL).

It localises to the membrane. This Bos taurus (Bovine) protein is Transmembrane protein 125 (TMEM125).